Consider the following 314-residue polypeptide: MDVLKISPRGYCYGVVDAMVMARQAAQNLDLPRPLYILGQIVHNQHVTDAFKEDGIISLDGPNRLEILKNVTHGTVIFTAHGVSPEVRRLAKEKGLTCIDATCPDVTRTHDLIREKAEEGYQFIYIGKQGHPEPEGAMGVAPDSVHLVETMEDLEQLTLDDRDIIITNQTTMSQWDVADIMKRAMELYPNAEVHNEICLATQVRQEAVAEQASQCDIVIVVGDPKSNNSNRLAQVSEQIAGTPAYRIGDLSELKLEWIKEAKKVGVTSGASTPTPITKEVITFIENYDPNDESTWDTAKKVPIEKILPKVRVKK.

Cys12 lines the [4Fe-4S] cluster pocket. (2E)-4-hydroxy-3-methylbut-2-enyl diphosphate is bound by residues His43 and His81. Positions 43 and 81 each coordinate dimethylallyl diphosphate. Residues His43 and His81 each coordinate isopentenyl diphosphate. Residue Cys103 coordinates [4Fe-4S] cluster. His131 contacts (2E)-4-hydroxy-3-methylbut-2-enyl diphosphate. His131 contacts dimethylallyl diphosphate. His131 is an isopentenyl diphosphate binding site. Glu133 (proton donor) is an active-site residue. (2E)-4-hydroxy-3-methylbut-2-enyl diphosphate is bound at residue Thr170. Cys198 is a binding site for [4Fe-4S] cluster. Residues Ser226, Asn228, and Ser271 each coordinate (2E)-4-hydroxy-3-methylbut-2-enyl diphosphate. Ser226, Asn228, and Ser271 together coordinate dimethylallyl diphosphate. The isopentenyl diphosphate site is built by Ser226, Asn228, and Ser271.

The protein belongs to the IspH family. The cofactor is [4Fe-4S] cluster.

The enzyme catalyses isopentenyl diphosphate + 2 oxidized [2Fe-2S]-[ferredoxin] + H2O = (2E)-4-hydroxy-3-methylbut-2-enyl diphosphate + 2 reduced [2Fe-2S]-[ferredoxin] + 2 H(+). The catalysed reaction is dimethylallyl diphosphate + 2 oxidized [2Fe-2S]-[ferredoxin] + H2O = (2E)-4-hydroxy-3-methylbut-2-enyl diphosphate + 2 reduced [2Fe-2S]-[ferredoxin] + 2 H(+). Its pathway is isoprenoid biosynthesis; dimethylallyl diphosphate biosynthesis; dimethylallyl diphosphate from (2E)-4-hydroxy-3-methylbutenyl diphosphate: step 1/1. The protein operates within isoprenoid biosynthesis; isopentenyl diphosphate biosynthesis via DXP pathway; isopentenyl diphosphate from 1-deoxy-D-xylulose 5-phosphate: step 6/6. Catalyzes the conversion of 1-hydroxy-2-methyl-2-(E)-butenyl 4-diphosphate (HMBPP) into a mixture of isopentenyl diphosphate (IPP) and dimethylallyl diphosphate (DMAPP). Acts in the terminal step of the DOXP/MEP pathway for isoprenoid precursor biosynthesis. The chain is 4-hydroxy-3-methylbut-2-enyl diphosphate reductase from Shouchella clausii (strain KSM-K16) (Alkalihalobacillus clausii).